A 209-amino-acid chain; its full sequence is Ras-like protein (209 aa).

15-22 (GGGGEGKS) contributes to the GTP binding site. Residues 37–45 (YDPTIEESY) carry the Effector region motif. Residues 62 to 66 (DTAGQ) and 121 to 124 (NKCD) contribute to the GTP site. Residues C202 and C203 are each lipidated (S-palmitoyl cysteine). A Cysteine methyl ester modification is found at C206. C206 is lipidated: S-geranylgeranyl cysteine. Positions 207–209 (IVM) are cleaved as a propeptide — removed in mature form.

Belongs to the small GTPase superfamily. Ras family.

The protein resides in the cell membrane. It carries out the reaction GTP + H2O = GDP + phosphate + H(+). With respect to regulation, alternates between an inactive form bound to GDP and an active form bound to GTP. Activated by a guanine nucleotide-exchange factor (GEF) and inactivated by a GTPase-activating protein (GAP). The chain is Ras-like protein from Laccaria bicolor (Bicoloured deceiver).